The sequence spans 118 residues: UPF0102 protein lpg2994 (118 aa).

The protein belongs to the UPF0102 family.

This chain is UPF0102 protein lpg2994, found in Legionella pneumophila subsp. pneumophila (strain Philadelphia 1 / ATCC 33152 / DSM 7513).